We begin with the raw amino-acid sequence, 917 residues long: Hexokinase HKDC1 (917 aa).

The segment at 1–20 (MFAVHLMAFYFSKLKEDQIK) is mitochondrial-binding peptide (MBP). Hexokinase domains lie at 16–458 (EDQI…MVTA) and 464–905 (QAQR…LITA). Residues Arg30 and 84 to 89 (DLGGSK) contribute to the ATP site. The segment at 73-207 (DGSENGEFLS…DMDVDILALV (135 aa)) is hexokinase small subdomain 1. 84 to 91 (DLGGSKFR) provides a ligand contact to D-glucose 6-phosphate. D-glucose-binding positions include Ser155, 172-173 (TK), and 208-209 (ND). Residues 208 to 447 (NDTVGTMMTC…CDVRFLLSES (240 aa)) are hexokinase large subdomain 1. Residues Asp209 and Thr232 each coordinate D-glucose 6-phosphate. D-glucose contacts are provided by residues Asn235, Glu260, and 291 to 294 (QLFE). D-glucose 6-phosphate is bound at residue 413-415 (DGT). 425-426 (KR) is a binding site for ATP. Residues Ser449 and 532-536 (DLGGT) each bind D-glucose 6-phosphate. Positions 521–654 (DGTEKGKFLA…EFDLDIVAVV (134 aa)) are hexokinase small subdomain 2. ATP is bound at residue 532–537 (DLGGTN). D-glucose-binding positions include 602–603 (SF), 619–620 (TK), and 655–656 (ND). The hexokinase large subdomain 2 stretch occupies residues 655 to 894 (NDTVGTMMTC…CDVTFMLSED (240 aa)). Asp656 and Thr679 together coordinate D-glucose 6-phosphate. Thr679 is a binding site for ATP. D-glucose contacts are provided by residues 681-682 (SN), Glu707, and Glu741. Residues 746-747 (GM), 783-787 (TKFLS), and 862-866 (TLYKL) each bind ATP. D-glucose 6-phosphate contacts are provided by residues 860 to 862 (DGT) and Ser896.

It belongs to the hexokinase family. Widely expressed. Highly expressed in the brush border, surface epithelium and the myenteric plexus of the small and large intestines; the acinar centrocytes and interlobular ducts of the pancreas; and the alveolar macrophages in the lungs (at protein level). Present at moderate level in the thyroid follicular epithelium (at protein level).

It localises to the cytoplasm. The protein localises to the mitochondrion membrane. It is found in the photoreceptor inner segment. The catalysed reaction is a D-hexose + ATP = a D-hexose 6-phosphate + ADP + H(+). It carries out the reaction D-glucose + ATP = D-glucose 6-phosphate + ADP + H(+). Its pathway is carbohydrate metabolism; hexose metabolism. It functions in the pathway carbohydrate degradation; glycolysis; D-glyceraldehyde 3-phosphate and glycerone phosphate from D-glucose: step 1/4. In terms of biological role, catalyzes the phosphorylation of hexose to hexose 6-phosphate, although at very low level compared to other hexokinases. Has low glucose phosphorylating activity compared to other hexokinases. Involved in glucose homeostasis and hepatic lipid accumulation. Required to maintain whole-body glucose homeostasis during pregnancy; however additional evidences are required to confirm this role. This chain is Hexokinase HKDC1, found in Homo sapiens (Human).